Consider the following 238-residue polypeptide: Ubiquinone biosynthesis O-methyltransferase (238 aa).

R40, G59, D80, and M125 together coordinate S-adenosyl-L-methionine.

The protein belongs to the methyltransferase superfamily. UbiG/COQ3 family.

It carries out the reaction a 3-demethylubiquinol + S-adenosyl-L-methionine = a ubiquinol + S-adenosyl-L-homocysteine + H(+). It catalyses the reaction a 3-(all-trans-polyprenyl)benzene-1,2-diol + S-adenosyl-L-methionine = a 2-methoxy-6-(all-trans-polyprenyl)phenol + S-adenosyl-L-homocysteine + H(+). It participates in cofactor biosynthesis; ubiquinone biosynthesis. O-methyltransferase that catalyzes the 2 O-methylation steps in the ubiquinone biosynthetic pathway. The chain is Ubiquinone biosynthesis O-methyltransferase from Paracidovorax citrulli (strain AAC00-1) (Acidovorax citrulli).